The following is a 161-amino-acid chain: Transcription elongation factor GreA (161 aa).

It belongs to the GreA/GreB family.

Functionally, necessary for efficient RNA polymerase transcription elongation past template-encoded arresting sites. The arresting sites in DNA have the property of trapping a certain fraction of elongating RNA polymerases that pass through, resulting in locked ternary complexes. Cleavage of the nascent transcript by cleavage factors such as GreA or GreB allows the resumption of elongation from the new 3'terminus. GreA releases sequences of 2 to 3 nucleotides. The sequence is that of Transcription elongation factor GreA from Desulfotalea psychrophila (strain LSv54 / DSM 12343).